The primary structure comprises 478 residues: GMP reductase (478 aa).

CBS domains lie at 95 to 152 (VVDT…VRDI) and 153 to 211 (ALSD…AVDA). NADP(+)-binding positions include 245–247 (DTA) and 295–297 (GVG). Residue Cys-302 is the Thioimidate intermediate of the active site.

Belongs to the IMPDH/GMPR family. GuaB1 subfamily. In terms of assembly, homooctamer composed of two tetramers. The oligomerization state is regulated by ligands and pH. It depends on a monovalent cation as a cofactor.

It carries out the reaction IMP + NH4(+) + NADP(+) = GMP + NADPH + 2 H(+). It participates in purine metabolism; IMP biosynthesis via salvage pathway. Its activity is regulated as follows. Activity is allosterically regulated by the ATP/GTP ratio in a pH-dependent manner. At pH 7.8, GTP has only a minor positive effect and ATP only a minor negative effect on the activity, however, at lower pH values, the effects of ATP and GTP increase. ATP-dependent inhibition can be restored by increasing GTP concentration. IMP and XMP are competitive inhibitors. Involved in the purine-salvage pathway. Catalyzes the NADPH-dependent conversion of GMP to IMP. Is not essential for viability, but may contribute to the regulation of the purine nucleotide pool by recycling GMP to IMP. In Mycolicibacterium smegmatis (strain ATCC 700084 / mc(2)155) (Mycobacterium smegmatis), this protein is GMP reductase.